The primary structure comprises 356 residues: DNA polymerase IV (356 aa).

Residues 7–187 (IIHVDMDAFY…LPVNRVPGVG (181 aa)) form the UmuC domain. Residues Asp11 and Asp105 each coordinate Mg(2+). The active site involves Glu106.

Belongs to the DNA polymerase type-Y family. As to quaternary structure, monomer. The cofactor is Mg(2+).

The protein localises to the cytoplasm. It catalyses the reaction DNA(n) + a 2'-deoxyribonucleoside 5'-triphosphate = DNA(n+1) + diphosphate. Poorly processive, error-prone DNA polymerase involved in untargeted mutagenesis. Copies undamaged DNA at stalled replication forks, which arise in vivo from mismatched or misaligned primer ends. These misaligned primers can be extended by PolIV. Exhibits no 3'-5' exonuclease (proofreading) activity. May be involved in translesional synthesis, in conjunction with the beta clamp from PolIII. The chain is DNA polymerase IV from Stenotrophomonas maltophilia (strain R551-3).